A 240-amino-acid polypeptide reads, in one-letter code: RNA-binding protein pno1 (240 aa).

The segment covering 1–15 has biased composition (basic and acidic residues); that stretch reads MEAENIRADAFEPAK. The disordered stretch occupies residues 1-61; the sequence is MEAENIRADA…APPKAKRARS (61 aa). One can recognise a KH domain in the interval 164-213; it reads QSRAIGRLAGKGGRTKFTIENVTKTRIVLADSKIHILGSYQNIQLARRAV.

Belongs to the PNO1 family.

The protein localises to the nucleus. The protein resides in the nucleolus. The sequence is that of RNA-binding protein pno1 (l(1)G0004) from Drosophila melanogaster (Fruit fly).